The following is a 320-amino-acid chain: Olfactory receptor 2W1 (320 aa).

The Extracellular portion of the chain corresponds to 1-25 (MDQSNYSSLHGFILLGFSNHPKMEM). Asn-5 is a glycosylation site (N-linked (GlcNAc...) asparagine). A helical transmembrane segment spans residues 26-49 (ILSGVVAIFYLITLVGNTAIILAS). Over 50–57 (LLDSQLHT) the chain is Cytoplasmic. The chain crosses the membrane as a helical span at residues 58–79 (PMYFFLRNLSFLDLCFTTSIIP). Residues 80–100 (QMLVNLWGPDKTISYVGCIIQ) are Extracellular-facing. Cysteines 97 and 189 form a disulfide. A helical membrane pass occupies residues 101–120 (LYVYMWLGSVECLLLAVMSY). Topologically, residues 121 to 139 (DRFTAICKPLHYFVVMNPH) are cytoplasmic. Residues 140-158 (LCLKMIIMIWSISLANSVV) traverse the membrane as a helical segment. At 159 to 195 (LCTLTLNLPTCGNNILDHFLCELPALVKIACVDTTTV) the chain is on the extracellular side. The chain crosses the membrane as a helical span at residues 196–219 (EMSVFALGIIIVLTPLILILISYG). Residues 220 to 236 (YIAKAVLRTKSKASQRK) lie on the Cytoplasmic side of the membrane. A helical membrane pass occupies residues 237–259 (AMNTCGSHLTVVSMFYGTIIYMY). Topologically, residues 260–272 (LQPGNRASKDQGK) are extracellular. The chain crosses the membrane as a helical span at residues 273 to 292 (FLTLFYTVITPSLNPLIYTL). Topologically, residues 293 to 320 (RNKDMKDALKKLMRFHHKSTKIKRNCKS) are cytoplasmic.

It belongs to the G-protein coupled receptor 1 family.

The protein resides in the cell membrane. Odorant receptor. The polypeptide is Olfactory receptor 2W1 (OR2W1) (Homo sapiens (Human)).